The chain runs to 319 residues: Lipoyl synthase (319 aa).

A disordered region spans residues 5–31; the sequence is LDTISANPVRPRHPEKANRPDALSPPK. Positions 61, 66, 72, 87, 91, 94, and 300 each coordinate [4Fe-4S] cluster. The 217-residue stretch at 73-289 folds into the Radical SAM core domain; it reads WDKKHATFMI…ETVAYTKGFL (217 aa).

This sequence belongs to the radical SAM superfamily. Lipoyl synthase family. [4Fe-4S] cluster serves as cofactor.

It is found in the cytoplasm. It carries out the reaction [[Fe-S] cluster scaffold protein carrying a second [4Fe-4S](2+) cluster] + N(6)-octanoyl-L-lysyl-[protein] + 2 oxidized [2Fe-2S]-[ferredoxin] + 2 S-adenosyl-L-methionine + 4 H(+) = [[Fe-S] cluster scaffold protein] + N(6)-[(R)-dihydrolipoyl]-L-lysyl-[protein] + 4 Fe(3+) + 2 hydrogen sulfide + 2 5'-deoxyadenosine + 2 L-methionine + 2 reduced [2Fe-2S]-[ferredoxin]. The protein operates within protein modification; protein lipoylation via endogenous pathway; protein N(6)-(lipoyl)lysine from octanoyl-[acyl-carrier-protein]: step 2/2. In terms of biological role, catalyzes the radical-mediated insertion of two sulfur atoms into the C-6 and C-8 positions of the octanoyl moiety bound to the lipoyl domains of lipoate-dependent enzymes, thereby converting the octanoylated domains into lipoylated derivatives. The polypeptide is Lipoyl synthase (Nitrobacter winogradskyi (strain ATCC 25391 / DSM 10237 / CIP 104748 / NCIMB 11846 / Nb-255)).